We begin with the raw amino-acid sequence, 229 residues long: Potassium/proton antiporter CemA (229 aa).

4 helical membrane-spanning segments follow: residues 7-27, 114-134, 154-174, and 189-209; these read FTPLPYLASIVFLPWWISFSF, IISFAILSGYSILGNEELVVL, ILLLTDLCIGFHSPHGWELMI, and IISGLVSTFPVILDTIFKYWI.

This sequence belongs to the CemA family.

It localises to the plastid. The protein resides in the chloroplast inner membrane. The enzyme catalyses K(+)(in) + H(+)(out) = K(+)(out) + H(+)(in). In terms of biological role, contributes to K(+)/H(+) antiport activity by supporting proton efflux to control proton extrusion and homeostasis in chloroplasts in a light-dependent manner to modulate photosynthesis. Prevents excessive induction of non-photochemical quenching (NPQ) under continuous-light conditions. Indirectly promotes efficient inorganic carbon uptake into chloroplasts. The chain is Potassium/proton antiporter CemA from Nandina domestica (Heavenly bamboo).